Reading from the N-terminus, the 395-residue chain is Putative 8-amino-7-oxononanoate synthase (395 aa).

Position 23 (arginine 23) interacts with substrate. 110 to 111 lines the pyridoxal 5'-phosphate pocket; it reads GY. Histidine 135 lines the substrate pocket. Pyridoxal 5'-phosphate contacts are provided by residues serine 182, 207–210, and 239–242; these read DEAH and TFSK. The residue at position 242 (lysine 242) is an N6-(pyridoxal phosphate)lysine. Residue threonine 356 coordinates substrate.

This sequence belongs to the class-II pyridoxal-phosphate-dependent aminotransferase family. BioF subfamily. As to quaternary structure, homodimer. It depends on pyridoxal 5'-phosphate as a cofactor.

It catalyses the reaction 6-carboxyhexanoyl-[ACP] + L-alanine + H(+) = (8S)-8-amino-7-oxononanoate + holo-[ACP] + CO2. It participates in cofactor biosynthesis; biotin biosynthesis. Catalyzes the decarboxylative condensation of pimeloyl-[acyl-carrier protein] and L-alanine to produce 8-amino-7-oxononanoate (AON), [acyl-carrier protein], and carbon dioxide. The polypeptide is Putative 8-amino-7-oxononanoate synthase (bioF) (Bacillus cereus (strain ZK / E33L)).